Consider the following 860-residue polypeptide: Leucine--tRNA ligase (860 aa).

Residues 42–52 carry the 'HIGH' region motif; the sequence is PYPSGRLHMGH. The 'KMSKS' region motif lies at 619 to 623; that stretch reads KMSKS. ATP is bound at residue Lys-622.

This sequence belongs to the class-I aminoacyl-tRNA synthetase family.

The protein localises to the cytoplasm. It carries out the reaction tRNA(Leu) + L-leucine + ATP = L-leucyl-tRNA(Leu) + AMP + diphosphate. In Salmonella typhi, this protein is Leucine--tRNA ligase.